The chain runs to 332 residues: Glycerol-3-phosphate dehydrogenase [NAD(P)+] (332 aa).

NADPH contacts are provided by Trp13, Lys34, and Lys108. Sn-glycerol 3-phosphate is bound by residues Lys108, Gly136, and Ser138. Ala140 is an NADPH binding site. 5 residues coordinate sn-glycerol 3-phosphate: Lys191, Asp244, Ser254, Arg255, and Asn256. The active-site Proton acceptor is Lys191. Arg255 serves as a coordination point for NADPH. 2 residues coordinate NADPH: Val279 and Glu281.

The protein belongs to the NAD-dependent glycerol-3-phosphate dehydrogenase family.

It localises to the cytoplasm. The catalysed reaction is sn-glycerol 3-phosphate + NAD(+) = dihydroxyacetone phosphate + NADH + H(+). The enzyme catalyses sn-glycerol 3-phosphate + NADP(+) = dihydroxyacetone phosphate + NADPH + H(+). It participates in membrane lipid metabolism; glycerophospholipid metabolism. Its function is as follows. Catalyzes the reduction of the glycolytic intermediate dihydroxyacetone phosphate (DHAP) to sn-glycerol 3-phosphate (G3P), the key precursor for phospholipid synthesis. This is Glycerol-3-phosphate dehydrogenase [NAD(P)+] from Francisella tularensis subsp. holarctica (strain FTNF002-00 / FTA).